Here is a 92-residue protein sequence, read N- to C-terminus: DNA-directed RNA polymerase subunit omega (92 aa).

The protein belongs to the RNA polymerase subunit omega family. The RNAP catalytic core consists of 2 alpha, 1 beta, 1 beta' and 1 omega subunit. When a sigma factor is associated with the core the holoenzyme is formed, which can initiate transcription.

It carries out the reaction RNA(n) + a ribonucleoside 5'-triphosphate = RNA(n+1) + diphosphate. In terms of biological role, promotes RNA polymerase assembly. Latches the N- and C-terminal regions of the beta' subunit thereby facilitating its interaction with the beta and alpha subunits. The chain is DNA-directed RNA polymerase subunit omega from Shewanella baltica (strain OS223).